The chain runs to 294 residues: Small ribosomal subunit protein uS2 (294 aa).

Positions 232-245 (RAAEQDKAADDKAQ) are enriched in basic and acidic residues. A disordered region spans residues 232 to 294 (RAAEQDKAAD…GSEEDGEAAN (63 aa)). Over residues 246–265 (EQAAAEAAKPEPAAPAPAAE) the composition is skewed to low complexity.

Belongs to the universal ribosomal protein uS2 family.

The protein is Small ribosomal subunit protein uS2 of Desulfatibacillum aliphaticivorans.